Consider the following 918-residue polypeptide: Valine--tRNA ligase (918 aa).

A 'HIGH' region motif is present at residues Pro-50–His-60. Positions Lys-548–Ser-552 match the 'KMSKS' region motif. An ATP-binding site is contributed by Lys-551. A coiled-coil region spans residues Asn-849–Asn-883.

The protein belongs to the class-I aminoacyl-tRNA synthetase family. ValS type 1 subfamily. Monomer.

Its subcellular location is the cytoplasm. The catalysed reaction is tRNA(Val) + L-valine + ATP = L-valyl-tRNA(Val) + AMP + diphosphate. Functionally, catalyzes the attachment of valine to tRNA(Val). As ValRS can inadvertently accommodate and process structurally similar amino acids such as threonine, to avoid such errors, it has a 'posttransfer' editing activity that hydrolyzes mischarged Thr-tRNA(Val) in a tRNA-dependent manner. In Prochlorococcus marinus subsp. pastoris (strain CCMP1986 / NIES-2087 / MED4), this protein is Valine--tRNA ligase.